A 240-amino-acid polypeptide reads, in one-letter code: Ubiquinone biosynthesis O-methyltransferase (240 aa).

4 residues coordinate S-adenosyl-L-methionine: arginine 44, glycine 64, aspartate 85, and methionine 129.

Belongs to the methyltransferase superfamily. UbiG/COQ3 family.

The catalysed reaction is a 3-demethylubiquinol + S-adenosyl-L-methionine = a ubiquinol + S-adenosyl-L-homocysteine + H(+). It catalyses the reaction a 3-(all-trans-polyprenyl)benzene-1,2-diol + S-adenosyl-L-methionine = a 2-methoxy-6-(all-trans-polyprenyl)phenol + S-adenosyl-L-homocysteine + H(+). It participates in cofactor biosynthesis; ubiquinone biosynthesis. Functionally, O-methyltransferase that catalyzes the 2 O-methylation steps in the ubiquinone biosynthetic pathway. The sequence is that of Ubiquinone biosynthesis O-methyltransferase from Escherichia coli O7:K1 (strain IAI39 / ExPEC).